The following is a 135-amino-acid chain: Helix-loop-helix protein 2 (135 aa).

The interval 1–80 is disordered; it reads MMLSPDQAAD…RRRATAKYRS (80 aa). Residues 10–21 are compositionally biased toward basic and acidic residues; it reads DSDHPSSAHSDP. The segment covering 68 to 80 has biased composition (basic residues); that stretch reads KRRRRRATAKYRS. Residues 77–129 form the bHLH domain; sequence KYRSAHATRERIRVEAFNLAFAELRKLLPTLPPDKKLSKIEILRLAICYISYL.

In terms of assembly, homodimer. Interacts and may form heterodimers with STAT3.

The protein localises to the nucleus. Its function is as follows. Transcription factor which binds the E box motif 5'-CA[TC][AG]TG-3'. Involved in regulating energy expenditure, body mass, voluntary physical activity, mating behavior and reproductive longevity, acting through the hypothalamic-pituitary-gonadal axis. Acts as a transcriptional activator of target genes, including NDN, PCSK1, MC4R. Is also a transcriptional activator of KISS1. May act centrally to regulate function of both white and brown adipose tissue. Together with NHLH1, required to maintain migration and survival of cells in the anterior extramural migration stream (aes), which forms the precerebellar nuclei. Also, in concert with NHLH1, may determine fate of gonadotropin releasing hormone-1 (GnRH-1) neurons. The sequence is that of Helix-loop-helix protein 2 (NHLH2) from Homo sapiens (Human).